The sequence spans 156 residues: Small ribosomal subunit protein uS7 (156 aa).

This sequence belongs to the universal ribosomal protein uS7 family. As to quaternary structure, part of the 30S ribosomal subunit. Contacts proteins S9 and S11.

Its function is as follows. One of the primary rRNA binding proteins, it binds directly to 16S rRNA where it nucleates assembly of the head domain of the 30S subunit. Is located at the subunit interface close to the decoding center, probably blocks exit of the E-site tRNA. This Picosynechococcus sp. (strain ATCC 27264 / PCC 7002 / PR-6) (Agmenellum quadruplicatum) protein is Small ribosomal subunit protein uS7.